Here is a 338-residue protein sequence, read N- to C-terminus: 2,3-dihydroxybenzoate decarboxylase (338 aa).

Residue cysteine 251 is part of the active site.

The protein belongs to the metallo-dependent hydrolases superfamily. Homotetramer.

It catalyses the reaction 2,3-dihydroxybenzoate + H(+) = catechol + CO2. It functions in the pathway aromatic compound metabolism; benzoate degradation via hydroxylation. Has an absolute substrate specificity for 2,3-DHBA. In Aspergillus oryzae (strain ATCC 42149 / RIB 40) (Yellow koji mold), this protein is 2,3-dihydroxybenzoate decarboxylase.